Here is a 285-residue protein sequence, read N- to C-terminus: Non-structural protein ORF4b (285 aa).

It localises to the host nucleus. It is found in the host nucleolus. Its subcellular location is the host cytoplasm. In terms of biological role, plays a role in the inhibition of host innate immunity by inhibiting the interaction between host IKBKE and MAVS. In turn, this inhibition prevents the production of host interferon beta. Additionally, may also interfere with host antiviral response within the nucleus. This is Non-structural protein ORF4b (ORF4b) from Tylonycteris pachypus (Lesser bamboo bat).